A 215-amino-acid polypeptide reads, in one-letter code: Nucleoredoxin-like protein 1 (215 aa).

In terms of domain architecture, Thioredoxin; atypical spans 1-164; it reads MVDLFLGKVL…GAELIDRNFM (164 aa). Positions 190–215 are disordered; it reads DEKKKKKKRDDDDDDDDGGGGGGPWG.

The protein belongs to the nucleoredoxin family.

It localises to the cell projection. It is found in the cilium. The protein localises to the photoreceptor outer segment. Plays an important role in retinal cone photoreceptor survival. May play a role in cone cell viability, slowing down cone degeneration, does not seem to play a role in degenerating rods. The polypeptide is Nucleoredoxin-like protein 1 (nxnl1) (Danio rerio (Zebrafish)).